The primary structure comprises 284 residues: Shikimate dehydrogenase (NADP(+)) (284 aa).

Shikimate contacts are provided by residues 23–25 (SLS) and threonine 70. The active-site Proton acceptor is lysine 74. Glutamate 86 contributes to the NADP(+) binding site. Shikimate is bound by residues asparagine 95 and aspartate 111. NADP(+)-binding positions include 135–139 (GAGGA), 159–164 (NRTPGR), and alanine 227. Residue tyrosine 229 participates in shikimate binding. Glycine 251 serves as a coordination point for NADP(+).

The protein belongs to the shikimate dehydrogenase family. In terms of assembly, homodimer.

It catalyses the reaction shikimate + NADP(+) = 3-dehydroshikimate + NADPH + H(+). It functions in the pathway metabolic intermediate biosynthesis; chorismate biosynthesis; chorismate from D-erythrose 4-phosphate and phosphoenolpyruvate: step 4/7. Functionally, involved in the biosynthesis of the chorismate, which leads to the biosynthesis of aromatic amino acids. Catalyzes the reversible NADPH linked reduction of 3-dehydroshikimate (DHSA) to yield shikimate (SA). The chain is Shikimate dehydrogenase (NADP(+)) from Rubrobacter xylanophilus (strain DSM 9941 / JCM 11954 / NBRC 16129 / PRD-1).